Reading from the N-terminus, the 139-residue chain is Putative esterase PM0788 (139 aa).

Belongs to the thioesterase PaaI family.

In Pasteurella multocida (strain Pm70), this protein is Putative esterase PM0788.